A 448-amino-acid chain; its full sequence is Probable glycine dehydrogenase (decarboxylating) subunit 1 (448 aa).

This sequence belongs to the GcvP family. N-terminal subunit subfamily. In terms of assembly, the glycine cleavage system is composed of four proteins: P, T, L and H. In this organism, the P 'protein' is a heterodimer of two subunits.

The enzyme catalyses N(6)-[(R)-lipoyl]-L-lysyl-[glycine-cleavage complex H protein] + glycine + H(+) = N(6)-[(R)-S(8)-aminomethyldihydrolipoyl]-L-lysyl-[glycine-cleavage complex H protein] + CO2. Functionally, the glycine cleavage system catalyzes the degradation of glycine. The P protein binds the alpha-amino group of glycine through its pyridoxal phosphate cofactor; CO(2) is released and the remaining methylamine moiety is then transferred to the lipoamide cofactor of the H protein. This Bacillus subtilis (strain 168) protein is Probable glycine dehydrogenase (decarboxylating) subunit 1 (gcvPA).